The chain runs to 261 residues: Proteasome subunit beta type-2 (261 aa).

Residues 1-29 constitute a propeptide, removed in mature form; it reads MAGLSFDNYQRNNFLAENSHTQPKATSTG. Threonine 30 (nucleophile) is an active-site residue.

It belongs to the peptidase T1B family. The 26S proteasome consists of a 20S proteasome core and two 19S regulatory subunits. The 20S proteasome core is composed of 28 subunits that are arranged in four stacked rings, resulting in a barrel-shaped structure. The two end rings are each formed by seven alpha subunits, and the two central rings are each formed by seven beta subunits. The catalytic chamber with the active sites is on the inside of the barrel.

It is found in the cytoplasm. The protein localises to the nucleus. It catalyses the reaction Cleavage of peptide bonds with very broad specificity.. In terms of biological role, the proteasome degrades poly-ubiquitinated proteins in the cytoplasm and in the nucleus. It is essential for the regulated turnover of proteins and for the removal of misfolded proteins. The proteasome is a multicatalytic proteinase complex that is characterized by its ability to cleave peptides with Arg, Phe, Tyr, Leu, and Glu adjacent to the leaving group at neutral or slightly basic pH. It has an ATP-dependent proteolytic activity. The chain is Proteasome subunit beta type-2 (PUP1) from Saccharomyces cerevisiae (strain ATCC 204508 / S288c) (Baker's yeast).